A 218-amino-acid polypeptide reads, in one-letter code: Putative glutamine transport system permease protein GlnP (218 aa).

An ABC transmembrane type-1 domain is found at 19-208 (TLVTLKYSVI…ILVMLISFIA (190 aa)). 4 helical membrane-spanning segments follow: residues 25-45 (YSVI…ICKV), 57-79 (FYTS…FASP), 86-108 (FSVF…SEVI), and 187-207 (FFPM…ISFI).

It belongs to the binding-protein-dependent transport system permease family. HisMQ subfamily.

It localises to the cell inner membrane. Its function is as follows. Part of the binding-protein-dependent transport system for glutamine; probably responsible for the translocation of the substrate across the membrane. This chain is Putative glutamine transport system permease protein GlnP (glnP), found in Rickettsia felis (strain ATCC VR-1525 / URRWXCal2) (Rickettsia azadi).